The chain runs to 320 residues: ATP-dependent 6-phosphofructokinase (320 aa).

Gly-12 lines the ATP pocket. Residue 22 to 26 (RGVVR) coordinates ADP. ATP is bound by residues 73–74 (RF) and 103–106 (GDGS). Asp-104 is a Mg(2+) binding site. Residue 126 to 128 (TID) participates in substrate binding. Catalysis depends on Asp-128, which acts as the Proton acceptor. Arg-155 is an ADP binding site. Substrate is bound by residues Arg-163 and 170-172 (MGR). ADP contacts are provided by residues 186-188 (GCE), Lys-212, and 214-216 (KKH). Substrate-binding positions include Glu-223, Arg-244, and 250–253 (HIQR).

It belongs to the phosphofructokinase type A (PFKA) family. ATP-dependent PFK group I subfamily. Prokaryotic clade 'B1' sub-subfamily. Homotetramer. It depends on Mg(2+) as a cofactor.

The protein localises to the cytoplasm. It catalyses the reaction beta-D-fructose 6-phosphate + ATP = beta-D-fructose 1,6-bisphosphate + ADP + H(+). It functions in the pathway carbohydrate degradation; glycolysis; D-glyceraldehyde 3-phosphate and glycerone phosphate from D-glucose: step 3/4. With respect to regulation, allosterically activated by ADP and other diphosphonucleosides, and allosterically inhibited by phosphoenolpyruvate. Functionally, catalyzes the phosphorylation of D-fructose 6-phosphate to fructose 1,6-bisphosphate by ATP, the first committing step of glycolysis. This Blochmanniella floridana protein is ATP-dependent 6-phosphofructokinase.